The sequence spans 104 residues: Probable guanidinium efflux system subunit GdnD (104 aa).

A run of 4 helical transmembrane segments spans residues 3-23 (WICL…MNQF), 31-51 (WIFL…LAME), 58-78 (AYAV…ILFY), and 84-104 (GKRI…KLIS).

Belongs to the drug/metabolite transporter (DMT) superfamily. Small multidrug resistance (SMR) (TC 2.A.7.1) family. YkkC/YkkD subfamily. The efflux pump is composed of GdnC and GdnD.

The protein resides in the cell membrane. Functionally, probably involved in guanidinium transport. The polypeptide is Probable guanidinium efflux system subunit GdnD (Bacillus licheniformis (strain ATCC 14580 / DSM 13 / JCM 2505 / CCUG 7422 / NBRC 12200 / NCIMB 9375 / NCTC 10341 / NRRL NRS-1264 / Gibson 46)).